The chain runs to 247 residues: Ribosomal RNA small subunit methyltransferase G (247 aa).

Residues Gly-86, Leu-91, and Arg-154 each coordinate S-adenosyl-L-methionine.

Belongs to the methyltransferase superfamily. RNA methyltransferase RsmG family.

The protein localises to the cytoplasm. Functionally, specifically methylates the N7 position of a guanine in 16S rRNA. The sequence is that of Ribosomal RNA small subunit methyltransferase G from Leptospira biflexa serovar Patoc (strain Patoc 1 / Ames).